The following is a 353-amino-acid chain: Photosystem II protein D1 (353 aa).

Thr2 is modified (N-acetylthreonine). Thr2 is subject to Phosphothreonine. 3 helical membrane passes run 29–46 (YIGWFGVLMIPTLLTATS), 118–133 (HFLLGVACYMGREWEL), and 142–156 (WIAVAYSAPVAAATA). Residue His118 participates in chlorophyll a binding. Tyr126 contributes to the pheophytin a binding site. Asp170 and Glu189 together coordinate [CaMn4O5] cluster. Residues 197-218 (FHMLGVAGVFGGSLFSAMHGSL) form a helical membrane-spanning segment. Residue His198 participates in chlorophyll a binding. A quinone contacts are provided by residues His215 and 264–265 (SF). Position 215 (His215) interacts with Fe cation. His272 lines the Fe cation pocket. Residues 274–288 (FLAAWPVIGIWFTAL) traverse the membrane as a helical segment. 4 residues coordinate [CaMn4O5] cluster: His332, Glu333, Asp342, and Ala344. Positions 345-353 (AVEAPSTNG) are excised as a propeptide.

The protein belongs to the reaction center PufL/M/PsbA/D family. PSII is composed of 1 copy each of membrane proteins PsbA, PsbB, PsbC, PsbD, PsbE, PsbF, PsbH, PsbI, PsbJ, PsbK, PsbL, PsbM, PsbT, PsbX, PsbY, PsbZ, Psb30/Ycf12, at least 3 peripheral proteins of the oxygen-evolving complex and a large number of cofactors. It forms dimeric complexes. The D1/D2 heterodimer binds P680, chlorophylls that are the primary electron donor of PSII, and subsequent electron acceptors. It shares a non-heme iron and each subunit binds pheophytin, quinone, additional chlorophylls, carotenoids and lipids. D1 provides most of the ligands for the Mn4-Ca-O5 cluster of the oxygen-evolving complex (OEC). There is also a Cl(-1) ion associated with D1 and D2, which is required for oxygen evolution. The PSII complex binds additional chlorophylls, carotenoids and specific lipids. serves as cofactor. Post-translationally, tyr-161 forms a radical intermediate that is referred to as redox-active TyrZ, YZ or Y-Z. C-terminally processed by CTPA; processing is essential to allow assembly of the oxygen-evolving complex and thus photosynthetic growth.

It localises to the plastid. The protein localises to the chloroplast thylakoid membrane. The enzyme catalyses 2 a plastoquinone + 4 hnu + 2 H2O = 2 a plastoquinol + O2. In terms of biological role, photosystem II (PSII) is a light-driven water:plastoquinone oxidoreductase that uses light energy to abstract electrons from H(2)O, generating O(2) and a proton gradient subsequently used for ATP formation. It consists of a core antenna complex that captures photons, and an electron transfer chain that converts photonic excitation into a charge separation. The D1/D2 (PsbA/PsbD) reaction center heterodimer binds P680, the primary electron donor of PSII as well as several subsequent electron acceptors. This chain is Photosystem II protein D1, found in Buxus microphylla (Littleleaf boxwood).